The following is a 133-amino-acid chain: Small ribosomal subunit protein uS19 (133 aa).

It belongs to the universal ribosomal protein uS19 family.

Functionally, protein S19 forms a complex with S13 that binds strongly to the 16S ribosomal RNA. The protein is Small ribosomal subunit protein uS19 of Thermococcus gammatolerans (strain DSM 15229 / JCM 11827 / EJ3).